The sequence spans 281 residues: Ribose-phosphate pyrophosphokinase (281 aa).

ATP contacts are provided by residues 33–35 (DGE) and 90–91 (RQ). 2 residues coordinate Mg(2+): His-123 and Asp-161. Lys-185 is an active-site residue. D-ribose 5-phosphate contacts are provided by Arg-187 and Asp-211.

It belongs to the ribose-phosphate pyrophosphokinase family. Class III (archaeal) subfamily. Mg(2+) serves as cofactor.

It is found in the cytoplasm. It catalyses the reaction D-ribose 5-phosphate + ATP = 5-phospho-alpha-D-ribose 1-diphosphate + AMP + H(+). The protein operates within metabolic intermediate biosynthesis; 5-phospho-alpha-D-ribose 1-diphosphate biosynthesis; 5-phospho-alpha-D-ribose 1-diphosphate from D-ribose 5-phosphate (route I): step 1/1. In terms of biological role, involved in the biosynthesis of the central metabolite phospho-alpha-D-ribosyl-1-pyrophosphate (PRPP) via the transfer of pyrophosphoryl group from ATP to 1-hydroxyl of ribose-5-phosphate (Rib-5-P). The sequence is that of Ribose-phosphate pyrophosphokinase from Halobacterium salinarum (strain ATCC 29341 / DSM 671 / R1).